The chain runs to 196 residues: ATP synthase subunit b 2 (196 aa).

A compositionally biased stretch (low complexity) spans methionine 1–alanine 18. The disordered stretch occupies residues methionine 1–phenylalanine 33. Residues phenylalanine 41–serine 60 traverse the membrane as a helical segment.

It belongs to the ATPase B chain family. In terms of assembly, F-type ATPases have 2 components, F(1) - the catalytic core - and F(0) - the membrane proton channel. F(1) has five subunits: alpha(3), beta(3), gamma(1), delta(1), epsilon(1). F(0) has three main subunits: a(1), b(2) and c(10-14). The alpha and beta chains form an alternating ring which encloses part of the gamma chain. F(1) is attached to F(0) by a central stalk formed by the gamma and epsilon chains, while a peripheral stalk is formed by the delta and b chains.

Its subcellular location is the cell inner membrane. Its function is as follows. F(1)F(0) ATP synthase produces ATP from ADP in the presence of a proton or sodium gradient. F-type ATPases consist of two structural domains, F(1) containing the extramembraneous catalytic core and F(0) containing the membrane proton channel, linked together by a central stalk and a peripheral stalk. During catalysis, ATP synthesis in the catalytic domain of F(1) is coupled via a rotary mechanism of the central stalk subunits to proton translocation. In terms of biological role, component of the F(0) channel, it forms part of the peripheral stalk, linking F(1) to F(0). The b'-subunit is a diverged and duplicated form of b found in plants and photosynthetic bacteria. This is ATP synthase subunit b 2 (atpF2) from Azorhizobium caulinodans (strain ATCC 43989 / DSM 5975 / JCM 20966 / LMG 6465 / NBRC 14845 / NCIMB 13405 / ORS 571).